Consider the following 407-residue polypeptide: MRQLLPGDTVWRNIRLATMDPQRQAPYGLVDNQALIVREGHICDIVPETQLPVSGDNIHDMQGRLVTPGLIDCHTHLVFAGNRAAEWEQRLNGASYQHISAQGGGINATVSATRACAEEPLYLLARERMMRLASEGVTLLEIKSGYGLELATEEKLLRVAAKLAAENAIDISPTLLAAHATPAEYRDDPDGYITLVCETMIPQLWQKGLFDAVDLFCESVGFNVAQSERVLQTAKALGIPVKGHVEQLSLLGGAQLLSRYQGLSADHIEYLDEAGVAAMRDGGTVGVLLPGAFYFLRERQRPPVELLRRYQVPVAVASDFNPGTSPFCSLHLAMNMACVQFGLTPEEVWAGVTRHAARALGRQATHGQIRAGYRADFVVWDAEQPVEIVYEPGRNPLYQRVYRGQIS.

Residues H74 and H76 each coordinate Fe(3+). Positions 74 and 76 each coordinate Zn(2+). Residues R83, Y146, and H179 each contribute to the 4-imidazolone-5-propanoate site. Y146 is a binding site for N-formimidoyl-L-glutamate. H244 serves as a coordination point for Fe(3+). H244 is a binding site for Zn(2+). Residue Q247 participates in 4-imidazolone-5-propanoate binding. Residue D319 participates in Fe(3+) binding. A Zn(2+)-binding site is contributed by D319. Residues N321 and G323 each contribute to the N-formimidoyl-L-glutamate site. T324 provides a ligand contact to 4-imidazolone-5-propanoate.

The protein belongs to the metallo-dependent hydrolases superfamily. HutI family. Zn(2+) serves as cofactor. Fe(3+) is required as a cofactor.

It is found in the cytoplasm. The enzyme catalyses 4-imidazolone-5-propanoate + H2O = N-formimidoyl-L-glutamate. It functions in the pathway amino-acid degradation; L-histidine degradation into L-glutamate; N-formimidoyl-L-glutamate from L-histidine: step 3/3. Its function is as follows. Catalyzes the hydrolytic cleavage of the carbon-nitrogen bond in imidazolone-5-propanoate to yield N-formimidoyl-L-glutamate. It is the third step in the universal histidine degradation pathway. In Salmonella agona (strain SL483), this protein is Imidazolonepropionase.